A 179-amino-acid chain; its full sequence is Large ribosomal subunit protein uL6 (179 aa).

It belongs to the universal ribosomal protein uL6 family. In terms of assembly, part of the 50S ribosomal subunit.

This protein binds to the 23S rRNA, and is important in its secondary structure. It is located near the subunit interface in the base of the L7/L12 stalk, and near the tRNA binding site of the peptidyltransferase center. The protein is Large ribosomal subunit protein uL6 of Rhodococcus opacus (strain B4).